Here is a 530-residue protein sequence, read N- to C-terminus: uncharacterized protein (530 aa).

Composition is skewed to basic and acidic residues over residues methionine 1–valine 11 and proline 28–proline 38. Residues methionine 1–proline 38 form a disordered region. Topologically, residues methionine 1–serine 50 are cytoplasmic. A helical membrane pass occupies residues phenylalanine 51–valine 71. Over alanine 72 to serine 91 the chain is Extracellular. A helical membrane pass occupies residues tryptophan 92–glycine 112. The Cytoplasmic segment spans residues aspartate 113–arginine 119. A helical transmembrane segment spans residues threonine 120–aspartate 140. The Extracellular segment spans residues glutamate 141–serine 150. The helical transmembrane segment at glutamine 151–proline 171 threads the bilayer. At lysine 172–threonine 180 the chain is on the cytoplasmic side. The chain crosses the membrane as a helical span at residues alanine 181–leucine 201. Residues threonine 202 to glutamate 203 are Extracellular-facing. The helical transmembrane segment at valine 204–alanine 224 threads the bilayer. Residues arginine 225–aspartate 239 are Cytoplasmic-facing. Residues alanine 240–glycine 260 form a helical membrane-spanning segment. Residues proline 261–methionine 266 are Extracellular-facing. A helical transmembrane segment spans residues serine 267–valine 287. The Cytoplasmic segment spans residues glutamate 288–arginine 306. Residues leucine 307–isoleucine 327 form a helical membrane-spanning segment. Residues glycine 328 to glycine 343 lie on the Extracellular side of the membrane. Residues valine 344 to valine 364 traverse the membrane as a helical segment. The Cytoplasmic segment spans residues serine 365 to arginine 370. A helical transmembrane segment spans residues valine 371–methionine 391. The Extracellular portion of the chain corresponds to histidine 392–asparagine 400. Residues leucine 401–leucine 421 traverse the membrane as a helical segment. Over serine 422–alanine 437 the chain is Cytoplasmic. The helical transmembrane segment at isoleucine 438–isoleucine 458 threads the bilayer. Topologically, residues threonine 459–threonine 488 are extracellular. The helical transmembrane segment at tyrosine 489–glycine 509 threads the bilayer. At tyrosine 510–leucine 530 the chain is on the cytoplasmic side.

This sequence belongs to the major facilitator superfamily.

The protein resides in the cell membrane. This is an uncharacterized protein from Mycobacterium tuberculosis (strain CDC 1551 / Oshkosh).